A 171-amino-acid chain; its full sequence is 3-hydroxydecanoyl-[acyl-carrier-protein] dehydratase (171 aa).

H70 is an active-site residue.

This sequence belongs to the thioester dehydratase family. FabA subfamily. In terms of assembly, homodimer.

The protein resides in the cytoplasm. It carries out the reaction a (3R)-hydroxyacyl-[ACP] = a (2E)-enoyl-[ACP] + H2O. It catalyses the reaction (3R)-hydroxydecanoyl-[ACP] = (2E)-decenoyl-[ACP] + H2O. The catalysed reaction is (2E)-decenoyl-[ACP] = (3Z)-decenoyl-[ACP]. It participates in lipid metabolism; fatty acid biosynthesis. Its function is as follows. Necessary for the introduction of cis unsaturation into fatty acids. Catalyzes the dehydration of (3R)-3-hydroxydecanoyl-ACP to E-(2)-decenoyl-ACP and then its isomerization to Z-(3)-decenoyl-ACP. Can catalyze the dehydratase reaction for beta-hydroxyacyl-ACPs with saturated chain lengths up to 16:0, being most active on intermediate chain length. This is 3-hydroxydecanoyl-[acyl-carrier-protein] dehydratase from Shewanella halifaxensis (strain HAW-EB4).